We begin with the raw amino-acid sequence, 273 residues long: tRNA (guanine-N(7)-)-methyltransferase (273 aa).

Residues 1 to 31 (MSQHPDINTNVDATSLTDDQKSLDTNATSGN) are compositionally biased toward polar residues. The interval 1 to 36 (MSQHPDINTNVDATSLTDDQKSLDTNATSGNEVAPD) is disordered. S-adenosyl-L-methionine-binding residues include E105, E130, D157, and D179. D179 is an active-site residue. Substrate contacts are provided by residues K183, D215, and 252-255 (TKFE).

It belongs to the class I-like SAM-binding methyltransferase superfamily. TrmB family.

It carries out the reaction guanosine(46) in tRNA + S-adenosyl-L-methionine = N(7)-methylguanosine(46) in tRNA + S-adenosyl-L-homocysteine. The protein operates within tRNA modification; N(7)-methylguanine-tRNA biosynthesis. Functionally, catalyzes the formation of N(7)-methylguanine at position 46 (m7G46) in tRNA. The sequence is that of tRNA (guanine-N(7)-)-methyltransferase from Psychrobacter cryohalolentis (strain ATCC BAA-1226 / DSM 17306 / VKM B-2378 / K5).